We begin with the raw amino-acid sequence, 680 residues long: ABC transporter B family member 24, mitochondrial (680 aa).

Residues 1-75 (MMRVSQLQLC…MFFSTSTSAP (75 aa)) constitute a mitochondrion transit peptide. The ABC transmembrane type-1 domain maps to 108-402 (VISAFACLVG…LGVVYSDTVQ (295 aa)). Transmembrane regions (helical) follow at residues 109-129 (ISAF…PFLF), 145-165 (NPYL…YGIA), 232-252 (AMVF…CILA), 255-275 (FGAV…AFTL), 340-360 (FALL…TAMV), and 376-396 (LVMV…LGVV). In terms of domain architecture, ABC transporter spans 439 to 673 (ISFENVHFSY…SGRYAKLWTQ (235 aa)). ATP contacts are provided by residues Tyr448 and 472–483 (GSSGSGKSTILR).

It belongs to the ABC transporter superfamily. ABCB family. Heavy Metal importer (TC 3.A.1.210) subfamily. Homodimer. As to expression, mostly expressed at low levels in roots and flowers.

It localises to the mitochondrion inner membrane. Its function is as follows. Performs an essential function in the generation of cytoplasmic iron-sulfur proteins by mediating export of Fe/S cluster precursors synthesized by NFS1 and other mitochondrial proteins. Not involved in the export of cyclic pyranopterin monophosphate (cPMP) from mitochondria to the cytosol. This chain is ABC transporter B family member 24, mitochondrial (ABCB24), found in Arabidopsis thaliana (Mouse-ear cress).